A 217-amino-acid chain; its full sequence is Thymidylate kinase (217 aa).

14–21 (GNEGSGKT) contributes to the ATP binding site.

The protein belongs to the thymidylate kinase family.

The catalysed reaction is dTMP + ATP = dTDP + ADP. In terms of biological role, phosphorylation of dTMP to form dTDP in both de novo and salvage pathways of dTTP synthesis. This Orientia tsutsugamushi (strain Ikeda) (Rickettsia tsutsugamushi) protein is Thymidylate kinase.